Reading from the N-terminus, the 422-residue chain is MSKKIQAIRGMNDLLPKNSALWLSLEKTIFDLFITYGYQNIRTPIVEKTDTFCRAIGGDTDIVEKEMYSWKETSGESLSLRPEGTAGCVRMMIEHNLPRESIQKVFYQGAMFRHERPQKGRYRQFHQVGLEIFGVFNAKADAELMIIMHALWQTIGLKNIVLEINTLGSNEVRNAYRKILVAYFNQHKNQLNEDGLKQLKTNPFRILDSKNKAIHSLISDAPKLMDYLDKKSIQHFKQFKSYLDALNITYVINTSLVRGLDYYNRTVFEWTTTDLGTQSTICAGGRYDGLIEKMGGTPTPAVGLAIGLERLVLLLEAQNLISTKSTLSIYLIAFGKKEQIKSIQIANVLHDELPNVILYNDLTLGSFKSQFEKADKAKANFALILGEQELNNNQISIKPLRNQGTQQTMNLEEAIKYFKENQ.

It belongs to the class-II aminoacyl-tRNA synthetase family. In terms of assembly, homodimer.

Its subcellular location is the cytoplasm. The catalysed reaction is tRNA(His) + L-histidine + ATP = L-histidyl-tRNA(His) + AMP + diphosphate + H(+). In Vesicomyosocius okutanii subsp. Calyptogena okutanii (strain HA), this protein is Histidine--tRNA ligase.